The following is a 216-amino-acid chain: Fibroblast growth factor 17 (216 aa).

The first 22 residues, 1 to 22 (MGAARLLPNLTLCLQLLILCCQ), serve as a signal peptide directing secretion. N137 is a glycosylation site (N-linked (GlcNAc...) asparagine). The disordered stretch occupies residues 195-216 (FEFVGSAPTRRTKRTRRPQSQT). A compositionally biased stretch (basic residues) spans 204-216 (RRTKRTRRPQSQT).

This sequence belongs to the heparin-binding growth factors family. As to quaternary structure, interacts with FGFR3 and FGFR4.

It localises to the secreted. In terms of biological role, plays an important role in the regulation of embryonic development and as signaling molecule in the induction and patterning of the embryonic brain. Required for normal brain development. In Mus musculus (Mouse), this protein is Fibroblast growth factor 17 (Fgf17).